A 123-amino-acid polypeptide reads, in one-letter code: Small ribosomal subunit protein uS12 (123 aa).

Positions 1–27 are disordered; the sequence is MPTIQQLIRKPRQPKIKRSKSMHLQEC. The segment covering 9–21 has biased composition (basic residues); that stretch reads RKPRQPKIKRSKS. A 3-methylthioaspartic acid modification is found at Asp89.

It belongs to the universal ribosomal protein uS12 family. Part of the 30S ribosomal subunit. Contacts proteins S8 and S17. May interact with IF1 in the 30S initiation complex.

Its function is as follows. With S4 and S5 plays an important role in translational accuracy. Functionally, interacts with and stabilizes bases of the 16S rRNA that are involved in tRNA selection in the A site and with the mRNA backbone. Located at the interface of the 30S and 50S subunits, it traverses the body of the 30S subunit contacting proteins on the other side and probably holding the rRNA structure together. The combined cluster of proteins S8, S12 and S17 appears to hold together the shoulder and platform of the 30S subunit. This is Small ribosomal subunit protein uS12 from Roseobacter denitrificans (strain ATCC 33942 / OCh 114) (Erythrobacter sp. (strain OCh 114)).